The chain runs to 497 residues: MSEAFLRFDGISVEFPGVKALDEVSFSARAGEVHALMGENGAGKSTLLKVLSGVNRPSSGQLWIDGQAHVFANAREALAHGIAIIYQELTLSPNLSVAENLLLGQLPERRGFIDRRTMKARAREILEELGEGDIDPATKVRELSIGQQQMIEIGRALLRDARIIAFDEPTSSLSVQETRQLKRIVARLRDEGRVVLYVTHRMEEVFEMCDAVTVFRDGRHIRTHETLEGLDHDMLVGEMVGRQIDDVYGFRPRDIGDVLMRIDGLQGRGVNEPVNLEVRRGEVLGLFGLVGAGRSELMRLVCGVEKASRGQVALRGETRVFASPHQAIRAGIAMCPEDRKSQGIFPVASVSDNLNISCRRFFRRWGMFRHAARETDNAKTYIQRLSIKTPSHRTPINTLSGGNQQKVILGRWLAEEIDLFVMDEPTRGIDVGARRDIYALLYDLAEQGKGVIVISSDLAEVSSICDRIGVMRDGVLVDIVPREQATQARLLGLALPA.

ABC transporter domains follow at residues 6-242 (LRFD…MVGR) and 250-497 (FRPR…ALPA). 38 to 45 (GENGAGKS) lines the ATP pocket.

The protein belongs to the ABC transporter superfamily. Arabinose importer (TC 3.A.1.2.2) family. The complex is composed of two ATP-binding proteins (AraG), two transmembrane proteins (AraH) and a solute-binding protein (AraF).

It is found in the cell inner membrane. The enzyme catalyses L-arabinose(out) + ATP + H2O = L-arabinose(in) + ADP + phosphate + H(+). Part of the ABC transporter complex AraFGH involved in arabinose import. Responsible for energy coupling to the transport system. This Chromohalobacter salexigens (strain ATCC BAA-138 / DSM 3043 / CIP 106854 / NCIMB 13768 / 1H11) protein is Arabinose import ATP-binding protein AraG.